Reading from the N-terminus, the 160-residue chain is Ribosome maturation factor RimP (160 aa).

Belongs to the RimP family.

It is found in the cytoplasm. Required for maturation of 30S ribosomal subunits. In Syntrophus aciditrophicus (strain SB), this protein is Ribosome maturation factor RimP.